The primary structure comprises 478 residues: Zinc metalloproteinase/disintegrin (478 aa).

The signal sequence occupies residues 1–20; the sequence is MIQVLLVTICLAAFPYQGSS. Positions 21-187 are excised as a propeptide; sequence IILESGNVND…PIKKASHLNL (167 aa). In terms of domain architecture, Peptidase M12B spans 193–389; the sequence is RYVEIVIVVD…QKPQCILKKP (197 aa). Intrachain disulfides connect Cys-304-Cys-384, Cys-344-Cys-368, and Cys-346-Cys-351. His-329 serves as a coordination point for Zn(2+). The active site involves Glu-330. 2 residues coordinate Zn(2+): His-333 and His-339. A propeptide spanning residues 390–408 is cleaved from the precursor; that stretch reads LRTDTVSTPVSGNELLEAR. A Disintegrin domain is found at 397 to 478; it reads TPVSGNELLE…ADCPRNVLYG (82 aa). 6 disulfide bridges follow: Cys-411/Cys-420, Cys-413/Cys-421, Cys-426/Cys-440, Cys-434/Cys-464, Cys-439/Cys-443, and Cys-452/Cys-471. The propeptide occupies 474–478; it reads NVLYG.

It belongs to the venom metalloproteinase (M12B) family. P-II subfamily. P-IIa sub-subfamily. Zn(2+) serves as cofactor. As to expression, expressed by the venom gland.

It is found in the secreted. Snake venom zinc metalloproteinase that causes hemorrhage by provoking the degradation of the sub-endothelial matrix proteins (fibronectin, laminin, type IV collagen, nidogen, and gelatins). In terms of biological role, displays low cytotoxicity. In vitro, inhibits cancer cell migration (human breast cancer cell line MDA-MB-231) with a significant rate after 24 hours of incubation. This is Zinc metalloproteinase/disintegrin (MPII) from Crotalus durissus collilineatus (Brazilian rattlesnake).